Consider the following 321-residue polypeptide: Ribose-phosphate pyrophosphokinase (321 aa).

Residues 39–41 (DGE) and 98–99 (RQ) each bind ATP. Residues H132 and D170 each contribute to the Mg(2+) site. K195 is an active-site residue. D-ribose 5-phosphate-binding positions include R197, D221, and 225-229 (DTGGT).

Belongs to the ribose-phosphate pyrophosphokinase family. Class I subfamily. In terms of assembly, homohexamer. Mg(2+) serves as cofactor.

The protein localises to the cytoplasm. It carries out the reaction D-ribose 5-phosphate + ATP = 5-phospho-alpha-D-ribose 1-diphosphate + AMP + H(+). It participates in metabolic intermediate biosynthesis; 5-phospho-alpha-D-ribose 1-diphosphate biosynthesis; 5-phospho-alpha-D-ribose 1-diphosphate from D-ribose 5-phosphate (route I): step 1/1. Its function is as follows. Involved in the biosynthesis of the central metabolite phospho-alpha-D-ribosyl-1-pyrophosphate (PRPP) via the transfer of pyrophosphoryl group from ATP to 1-hydroxyl of ribose-5-phosphate (Rib-5-P). This chain is Ribose-phosphate pyrophosphokinase, found in Mycoplasmopsis pulmonis (strain UAB CTIP) (Mycoplasma pulmonis).